A 632-amino-acid polypeptide reads, in one-letter code: Phosphatidylinositol-3,5-bisphosphate 3-phosphatase MTMR8 (632 aa).

The Myotubularin phosphatase domain maps to glycine 126 to tyrosine 500. 3 residues coordinate a 1,2-diacyl-sn-glycero-3-phospho-(1D-myo-inositol-3,5-bisphosphate): asparagine 250, asparagine 275, and isoleucine 276. Asparagine 250, asparagine 275, and isoleucine 276 together coordinate a 1,2-diacyl-sn-glycero-3-phospho-(1D-myo-inositol-3-phosphate). Catalysis depends on cysteine 338, which acts as the Phosphocysteine intermediate. Serine 339, aspartate 340, glycine 341, tryptophan 342, aspartate 343, arginine 344, lysine 380, and arginine 384 together coordinate a 1,2-diacyl-sn-glycero-3-phospho-(1D-myo-inositol-3,5-bisphosphate). A 1,2-diacyl-sn-glycero-3-phospho-(1D-myo-inositol-3-phosphate) is bound by residues serine 339, aspartate 340, glycine 341, tryptophan 342, aspartate 343, and arginine 344. 2 residues coordinate phosphate: serine 339 and aspartate 340. Residues tryptophan 342, aspartate 343, and arginine 344 each coordinate phosphate. Arginine 384 is a binding site for a 1,2-diacyl-sn-glycero-3-phospho-(1D-myo-inositol-3-phosphate). Positions leucine 545–serine 632 are disordered. Over residues glutamate 602–serine 632 the composition is skewed to basic and acidic residues.

The protein belongs to the protein-tyrosine phosphatase family. Non-receptor class myotubularin subfamily. Homodimer.

The protein resides in the nucleus envelope. The enzyme catalyses a 1,2-diacyl-sn-glycero-3-phospho-(1D-myo-inositol-3,5-bisphosphate) + H2O = a 1,2-diacyl-sn-glycero-3-phospho-(1D-myo-inositol-5-phosphate) + phosphate. It catalyses the reaction a 1,2-diacyl-sn-glycero-3-phospho-(1D-myo-inositol-3-phosphate) + H2O = a 1,2-diacyl-sn-glycero-3-phospho-(1D-myo-inositol) + phosphate. It carries out the reaction 1,2-dioctanoyl-sn-glycero-3-phospho-(1D-myo-inositol-3,5-bisphosphate) + H2O = 1,2-dioctanoyl-sn-glycero-3-phospho-(1D-myo-inositol-5-phosphate) + phosphate. In terms of biological role, lipid phosphatase that specifically dephosphorylates the D-3 position of phosphatidylinositol 3-phosphate and phosphatidylinositol 3,5-bisphosphate, generating phosphatidylinositol and phosphatidylinositol 5-phosphate. This chain is Phosphatidylinositol-3,5-bisphosphate 3-phosphatase MTMR8 (mtmr8), found in Danio rerio (Zebrafish).